The primary structure comprises 831 residues: DNA polymerase I, thermostable (831 aa).

Residues 174–258 enclose the 5'-3' exonuclease domain; the sequence is RPEQWVDYRA…TDLPLEVDFG (85 aa). Residues 409-831 are polymerase; sequence ERLFQTLKER…LGEDWLSAKE (423 aa).

It belongs to the DNA polymerase type-A family.

It carries out the reaction DNA(n) + a 2'-deoxyribonucleoside 5'-triphosphate = DNA(n+1) + diphosphate. In terms of biological role, in addition to polymerase activity, this DNA polymerase exhibits 5'-3' exonuclease activity. The chain is DNA polymerase I, thermostable (polA) from Thermus thermophilus.